We begin with the raw amino-acid sequence, 622 residues long: Wall-associated receptor kinase-like 21 (622 aa).

A signal peptide spans 1–21; it reads MAETPQPYLIFVFFVFTLTVA. Residues 22 to 247 lie on the Extracellular side of the membrane; the sequence is TQTTGSVKCK…LVYKRKGLHK (226 aa). N-linked (GlcNAc...) asparagine glycosylation is found at Asn-50, Asn-114, Asn-131, Asn-160, and Asn-195. The helical transmembrane segment at 248–268 threads the bilayer; that stretch reads LVVLGTAGILVGVLVIVVLIA. At 269 to 622 the chain is on the cytoplasmic side; the sequence is TYFFRNKQSA…MKRQQSFPRE (354 aa). Positions 314–594 constitute a Protein kinase domain; the sequence is FSDKNMLGTG…EITEDLHRIK (281 aa). Residues 320 to 328 and Lys-342 each bind ATP; that span reads LGTGAYGTV. Asp-439 acts as the Proton acceptor in catalysis.

It belongs to the protein kinase superfamily. Ser/Thr protein kinase family.

The protein localises to the membrane. The enzyme catalyses L-seryl-[protein] + ATP = O-phospho-L-seryl-[protein] + ADP + H(+). It carries out the reaction L-threonyl-[protein] + ATP = O-phospho-L-threonyl-[protein] + ADP + H(+). In terms of biological role, serine/threonine-protein kinase that may function as a signaling receptor of extracellular matrix component. The polypeptide is Wall-associated receptor kinase-like 21 (WAKL21) (Arabidopsis thaliana (Mouse-ear cress)).